Consider the following 690-residue polypeptide: Elongation factor G (690 aa).

The tr-type G domain occupies 8-283; that stretch reads SKCRNIGIMA…AVVDFLPAPN (276 aa). GTP-binding positions include 17-24, 81-85, and 135-138; these read AHIDAGKT, DTPGH, and NKMD.

It belongs to the TRAFAC class translation factor GTPase superfamily. Classic translation factor GTPase family. EF-G/EF-2 subfamily.

The protein localises to the cytoplasm. Catalyzes the GTP-dependent ribosomal translocation step during translation elongation. During this step, the ribosome changes from the pre-translocational (PRE) to the post-translocational (POST) state as the newly formed A-site-bound peptidyl-tRNA and P-site-bound deacylated tRNA move to the P and E sites, respectively. Catalyzes the coordinated movement of the two tRNA molecules, the mRNA and conformational changes in the ribosome. This Ehrlichia canis (strain Jake) protein is Elongation factor G.